We begin with the raw amino-acid sequence, 442 residues long: D-serine dehydratase (442 aa).

Lys118 is modified (N6-(pyridoxal phosphate)lysine).

This sequence belongs to the serine/threonine dehydratase family. DsdA subfamily. As to quaternary structure, monomer. Requires pyridoxal 5'-phosphate as cofactor.

The catalysed reaction is D-serine = pyruvate + NH4(+). This Shigella dysenteriae serotype 1 (strain Sd197) protein is D-serine dehydratase.